The following is a 510-amino-acid chain: Fumarate hydratase, mitochondrial (510 aa).

Residues 1–44 (MYRALWLLARSRRLVRPPASALASAPGLSGAAVPSFWPPNAARM) constitute a mitochondrion transit peptide. N6-acetyllysine; alternate occurs at positions 61, 66, and 80. 3 positions are modified to N6-succinyllysine; alternate: lysine 61, lysine 66, and lysine 80. Phosphothreonine is present on residues threonine 85 and threonine 90. Lysine 94 bears the N6-acetyllysine mark. An N6-acetyllysine; alternate mark is found at lysine 115 and lysine 122. N6-succinyllysine; alternate occurs at positions 115 and 122. Substrate-binding positions include 145 to 147 (SGT), 176 to 179 (HPND), and 186 to 188 (SSN). Residue lysine 213 is modified to N6-acetyllysine. Position 223 is an N6-acetyllysine; alternate (lysine 223). N6-succinyllysine; alternate is present on lysine 223. Threonine 234 lines the substrate pocket. Residue histidine 235 is the Proton donor/acceptor of the active site. The residue at position 236 (threonine 236) is a Phosphothreonine. N6-acetyllysine is present on lysine 256. Lysine 292 bears the N6-acetyllysine; alternate mark. The residue at position 292 (lysine 292) is an N6-succinyllysine; alternate. Residue serine 365 is part of the active site. Residues serine 366 and 371 to 373 (KVN) contribute to the substrate site. Position 366 is a phosphoserine (serine 366). N6-succinyllysine occurs at positions 467 and 473. The residue at position 502 (lysine 502) is an N6-acetyllysine.

The protein belongs to the class-II fumarase/aspartase family. Fumarase subfamily. In terms of assembly, homotetramer. Interacts with H2AZ1. In terms of processing, phosphorylation at Thr-236 by PRKDC in response to DNA damage promotes translocation to the nucleus and recruitment to DNA double-strand breaks (DSBs).

Its subcellular location is the mitochondrion. The protein resides in the cytoplasm. It is found in the cytosol. The protein localises to the nucleus. It localises to the chromosome. It carries out the reaction (S)-malate = fumarate + H2O. It functions in the pathway carbohydrate metabolism; tricarboxylic acid cycle; (S)-malate from fumarate: step 1/1. In terms of biological role, catalyzes the reversible stereospecific interconversion of fumarate to L-malate. Experiments in other species have demonstrated that specific isoforms of this protein act in defined pathways and favor one direction over the other. Its function is as follows. Catalyzes the hydration of fumarate to L-malate in the tricarboxylic acid (TCA) cycle to facilitate a transition step in the production of energy in the form of NADH. Functionally, catalyzes the dehydration of L-malate to fumarate. Fumarate metabolism in the cytosol plays a role during urea cycle and arginine metabolism; fumarate being a by-product of the urea cycle and amino-acid catabolism. Also plays a role in DNA repair by promoting non-homologous end-joining (NHEJ). In response to DNA damage and phosphorylation by PRKDC, translocates to the nucleus and accumulates at DNA double-strand breaks (DSBs): acts by catalyzing formation of fumarate, an inhibitor of KDM2B histone demethylase activity, resulting in enhanced dimethylation of histone H3 'Lys-36' (H3K36me2). This chain is Fumarate hydratase, mitochondrial, found in Macaca fascicularis (Crab-eating macaque).